The sequence spans 64 residues: Small ribosomal subunit protein bS21 (64 aa).

It belongs to the bacterial ribosomal protein bS21 family.

The protein is Small ribosomal subunit protein bS21 of Oenococcus oeni (strain ATCC BAA-331 / PSU-1).